The chain runs to 158 residues: Cyclic pyranopterin monophosphate synthase (158 aa).

Substrate is bound by residues 76-78 (LCH) and 114-115 (ME). Residue Asp129 is part of the active site.

This sequence belongs to the MoaC family. In terms of assembly, homohexamer; trimer of dimers.

The catalysed reaction is (8S)-3',8-cyclo-7,8-dihydroguanosine 5'-triphosphate = cyclic pyranopterin phosphate + diphosphate. The protein operates within cofactor biosynthesis; molybdopterin biosynthesis. Its function is as follows. Catalyzes the conversion of (8S)-3',8-cyclo-7,8-dihydroguanosine 5'-triphosphate to cyclic pyranopterin monophosphate (cPMP). The polypeptide is Cyclic pyranopterin monophosphate synthase (Brucella anthropi (strain ATCC 49188 / DSM 6882 / CCUG 24695 / JCM 21032 / LMG 3331 / NBRC 15819 / NCTC 12168 / Alc 37) (Ochrobactrum anthropi)).